A 61-amino-acid chain; its full sequence is Sperm protamine P1 (61 aa).

The disordered stretch occupies residues 1 to 61 (MARYRHSRSR…RRYHSHRRRY (61 aa)).

Belongs to the protamine P1 family. Testis.

Its subcellular location is the nucleus. It is found in the chromosome. Protamines substitute for histones in the chromatin of sperm during the haploid phase of spermatogenesis. They compact sperm DNA into a highly condensed, stable and inactive complex. This is Sperm protamine P1 (PRM1) from Notoryctes typhlops (Southern marsupial mole).